The chain runs to 655 residues: Probable inactive receptor kinase At1g48480 (655 aa).

The signal sequence occupies residues 1–32 (MRVFFFPNSSMAILSVFLSLLLLSLPLPSTQD). LRR repeat units follow at residues 71–95 (SNRV…IFGN), 98–120 (QLRT…LSTS), 122–144 (NLRH…LFSL), 146–169 (HLVR…TNLT), 170–192 (KLKT…DLPL), and 194–215 (QFNV…RFES). The disordered stretch occupies residues 234–260 (EETVPSQPTSGGNRTPPSVEGSEEKKK). Residues 237–249 (VPSQPTSGGNRTP) are compositionally biased toward polar residues. Residues 269-289 (IAGIVIGCVVGFALIVLILMV) form a helical membrane-spanning segment. Positions 371–646 (RASAEVLGKG…RKMENLRPYS (276 aa)) constitute a Protein kinase domain. Position 373 is a phosphoserine (Ser-373). 377 to 385 (LGKGTFGTA) is a binding site for ATP. Thr-394 carries the post-translational modification Phosphothreonine. Lys-399 is an ATP binding site. Ser-450 carries the phosphoserine modification. Position 526 is a phosphothreonine (Thr-526). Phosphoserine is present on Ser-546. Residue Thr-622 is modified to Phosphothreonine.

It belongs to the protein kinase superfamily. As to expression, highly expressed in seedlings and leaves. Lower expression in roots, stems, flowers and siliques. Detected in the vascular tissues of roots, in the trichomes of young rosettes leaves and hydathodes, in the floral abscission zones, in filament apex and stomata cells of anthers, in inflorescence stems and in sepals.

The protein resides in the cell membrane. This chain is Probable inactive receptor kinase At1g48480 (RKL1), found in Arabidopsis thaliana (Mouse-ear cress).